The chain runs to 486 residues: Ribulose bisphosphate carboxylase large chain (486 aa).

The substrate site is built by Asn125 and Thr175. Lys177 (proton acceptor) is an active-site residue. Lys179 is a substrate binding site. Residues Lys203, Asp205, and Glu206 each contribute to the Mg(2+) site. Lys203 carries the N6-carboxylysine modification. His295 acts as the Proton acceptor in catalysis. 3 residues coordinate substrate: Arg296, His328, and Ser380.

Belongs to the RuBisCO large chain family. Type I subfamily. As to quaternary structure, heterohexadecamer of 8 large chains and 8 small chains. It depends on Mg(2+) as a cofactor.

It carries out the reaction 2 (2R)-3-phosphoglycerate + 2 H(+) = D-ribulose 1,5-bisphosphate + CO2 + H2O. It catalyses the reaction D-ribulose 1,5-bisphosphate + O2 = 2-phosphoglycolate + (2R)-3-phosphoglycerate + 2 H(+). RuBisCO catalyzes two reactions: the carboxylation of D-ribulose 1,5-bisphosphate, the primary event in carbon dioxide fixation, as well as the oxidative fragmentation of the pentose substrate. Both reactions occur simultaneously and in competition at the same active site. This is Ribulose bisphosphate carboxylase large chain from Afipia carboxidovorans (strain ATCC 49405 / DSM 1227 / KCTC 32145 / OM5) (Oligotropha carboxidovorans).